A 122-amino-acid chain; its full sequence is Ribosome-binding factor A (122 aa).

It belongs to the RbfA family. Monomer. Binds 30S ribosomal subunits, but not 50S ribosomal subunits or 70S ribosomes.

The protein resides in the cytoplasm. Functionally, one of several proteins that assist in the late maturation steps of the functional core of the 30S ribosomal subunit. Associates with free 30S ribosomal subunits (but not with 30S subunits that are part of 70S ribosomes or polysomes). Required for efficient processing of 16S rRNA. May interact with the 5'-terminal helix region of 16S rRNA. This Opitutus terrae (strain DSM 11246 / JCM 15787 / PB90-1) protein is Ribosome-binding factor A.